A 342-amino-acid chain; its full sequence is Cathepsin B-like cysteine proteinase 1 (342 aa).

The N-terminal stretch at 1–18 (MKYLVLALCTYLCSQTGA) is a signal peptide. The propeptide at 19-86 (DENAAQGIPL…VKEDPDPEVD (68 aa)) is activation peptide. Asn-99 carries an N-linked (GlcNAc...) asparagine glycan. 6 disulfide bridges follow: Cys-100–Cys-128, Cys-111–Cys-156, Cys-147–Cys-214, Cys-148–Cys-152, Cys-185–Cys-218, and Cys-193–Cys-205. The active site involves Cys-114. An N-linked (GlcNAc...) asparagine glycan is attached at Asn-138. N-linked (GlcNAc...) asparagine glycosylation occurs at Asn-198. The active site involves His-285. Residue Asn-296 is glycosylated (N-linked (GlcNAc...) asparagine). Asn-305 is a catalytic residue.

Belongs to the peptidase C1 family.

Functionally, expression of the protease correlates with blood-feeding and suggests a role for the protease in blood digestion. This is Cathepsin B-like cysteine proteinase 1 (AC-1) from Haemonchus contortus (Barber pole worm).